Reading from the N-terminus, the 507-residue chain is Tryptophan aminotransferase-related protein 2 (507 aa).

A disordered region spans residues 91–135 (PPPHHHHHDAGLATRSSDAAVHRRARTASSMAPSTGKPAVTTDSV). Residues Tyr-169, 211 to 212 (ST), Asn-282, 304 to 307 (DLAY), 327 to 330 (TVSK), and Arg-338 contribute to the pyridoxal 5'-phosphate site. N6-(pyridoxal phosphate)lysine is present on Lys-330.

The protein belongs to the alliinase family. Pyridoxal 5'-phosphate serves as cofactor. In terms of tissue distribution, widely expressed.

It carries out the reaction L-tryptophan + 2-oxoglutarate = indole-3-pyruvate + L-glutamate. Its pathway is plant hormone metabolism; auxin biosynthesis. In terms of biological role, probable tryptophan aminotransferase involved in auxin (IAA) biosynthesis. Required for auxin production to initiate multiple change in growth in response to environmental and developmental cues. Functions upstream of YUCCA1 in auxin biosynthesis. Required for polar auxin transport. The protein is Tryptophan aminotransferase-related protein 2 of Oryza sativa subsp. japonica (Rice).